A 397-amino-acid polypeptide reads, in one-letter code: Elongation factor Tu (397 aa).

Residues Lys-10–Gln-206 form the tr-type G domain. Residues Gly-19–Thr-26 are G1. Position 19–26 (Gly-19–Thr-26) interacts with GTP. Residue Thr-26 coordinates Mg(2+). Positions Gly-62–Ser-66 are G2. The interval Asp-83–Gly-86 is G3. GTP is bound by residues Asp-83 to His-87 and Asn-138 to Asp-141. Residues Asn-138–Asp-141 are G4. Positions Ser-176 to Leu-178 are G5.

The protein belongs to the TRAFAC class translation factor GTPase superfamily. Classic translation factor GTPase family. EF-Tu/EF-1A subfamily. As to quaternary structure, monomer.

Its subcellular location is the cytoplasm. It carries out the reaction GTP + H2O = GDP + phosphate + H(+). Its function is as follows. GTP hydrolase that promotes the GTP-dependent binding of aminoacyl-tRNA to the A-site of ribosomes during protein biosynthesis. This is Elongation factor Tu from Frankia alni (strain DSM 45986 / CECT 9034 / ACN14a).